The chain runs to 87 residues: Small ribosomal subunit protein bS20 (87 aa).

It belongs to the bacterial ribosomal protein bS20 family.

Its function is as follows. Binds directly to 16S ribosomal RNA. The polypeptide is Small ribosomal subunit protein bS20 (Roseobacter denitrificans (strain ATCC 33942 / OCh 114) (Erythrobacter sp. (strain OCh 114))).